Reading from the N-terminus, the 264-residue chain is Small ribosomal subunit protein eS1 (264 aa).

At Lys-34 the chain carries N6-acetyllysine; alternate. Residue Lys-34 forms a Glycyl lysine isopeptide (Lys-Gly) (interchain with G-Cter in SUMO2); alternate linkage. Lys-56 carries the N6-acetyllysine modification. Tyr-155 is modified (ADP-ribosyltyrosine). Residues 233–264 (GEGSSSGKATGDETGAKVERADGYEPPVQESV) form a disordered region. 2 positions are modified to phosphoserine: Ser-236 and Ser-237. The segment covering 242-255 (TGDETGAKVERADG) has biased composition (basic and acidic residues). Lys-249 is modified (N6-acetyllysine; alternate). Lys-249 participates in a covalent cross-link: Glycyl lysine isopeptide (Lys-Gly) (interchain with G-Cter in SUMO2); alternate. A Phosphotyrosine modification is found at Tyr-256. Ser-263 bears the Phosphoserine mark.

The protein belongs to the eukaryotic ribosomal protein eS1 family. Component of the small ribosomal subunit. Mature ribosomes consist of a small (40S) and a large (60S) subunit. The 40S subunit contains about 33 different proteins and 1 molecule of RNA (18S). The 60S subunit contains about 49 different proteins and 3 molecules of RNA (28S, 5.8S and 5S). Part of the small subunit (SSU) processome, composed of more than 70 proteins and the RNA chaperone small nucleolar RNA (snoRNA) U3. ADP-ribosylated at Tyr-155 by PARP1 in presence of HPF1.

It is found in the cytoplasm. It localises to the nucleus. The protein localises to the nucleolus. In terms of biological role, component of the small ribosomal subunit. The ribosome is a large ribonucleoprotein complex responsible for the synthesis of proteins in the cell. Part of the small subunit (SSU) processome, first precursor of the small eukaryotic ribosomal subunit. During the assembly of the SSU processome in the nucleolus, many ribosome biogenesis factors, an RNA chaperone and ribosomal proteins associate with the nascent pre-rRNA and work in concert to generate RNA folding, modifications, rearrangements and cleavage as well as targeted degradation of pre-ribosomal RNA by the RNA exosome. May play a role during erythropoiesis. The sequence is that of Small ribosomal subunit protein eS1 from Callithrix jacchus (White-tufted-ear marmoset).